The following is a 459-amino-acid chain: Elongation factor 1-alpha 1 (459 aa).

The region spanning 5–242 (KTHINIVVIG…DCIIPPQRPT (238 aa)) is the tr-type G domain. Positions 14-21 (GHVDSGKS) are G1. Residues 70–74 (GITID) are G2. Positions 91-94 (DAPG) are G3. The G4 stretch occupies residues 153–156 (NKMD). Residues 194–196 (SGF) form a G5 region. 5-glutamyl glycerylphosphorylethanolamine is present on residues Glu-301 and Glu-374.

This sequence belongs to the TRAFAC class translation factor GTPase superfamily. Classic translation factor GTPase family. EF-Tu/EF-1A subfamily.

Its subcellular location is the cytoplasm. Its function is as follows. This protein promotes the GTP-dependent binding of aminoacyl-tRNA to the A-site of ribosomes during protein biosynthesis. The chain is Elongation factor 1-alpha 1 (eft-1) from Oscheius tipulae.